Reading from the N-terminus, the 332-residue chain is MTASAHDPAREAIETIRARVFAFPKRHFLSAGDLNAPQAADLLDLADAFVALNRQTSKTLDILKGRTLMNLFFENSTRTQSSFELAGKRLGADVVNMNPKTSSVAKGETLIDTAVTLNAMRPDLLVVRHASSGAASLLSQKVSGHVVNAGDGQHEHPTQALLDALSIRRAFGRVSGLTVAICGDVLHSRVARSNVALLHTLGASVRLVGPPTLMPAQAERWGVAVHHDMKSGLAGADVVMMLRLQLERMQGAFVPSTREYFRFYGLDREKLSRAAPGAKVMHPGPMNRGVEIDSDVADDPAVSLIQDQVEMGVAARMAVLASLAARIEGAGR.

Residues Arg78 and Thr79 each coordinate carbamoyl phosphate. Position 106 (Lys106) interacts with L-aspartate. Carbamoyl phosphate contacts are provided by Arg128, His156, and Gln159. Arg189 and Arg243 together coordinate L-aspartate. 2 residues coordinate carbamoyl phosphate: Gly284 and Pro285.

The protein belongs to the aspartate/ornithine carbamoyltransferase superfamily. ATCase family. Heterododecamer (2C3:3R2) of six catalytic PyrB chains organized as two trimers (C3), and six regulatory PyrI chains organized as three dimers (R2).

It catalyses the reaction carbamoyl phosphate + L-aspartate = N-carbamoyl-L-aspartate + phosphate + H(+). It participates in pyrimidine metabolism; UMP biosynthesis via de novo pathway; (S)-dihydroorotate from bicarbonate: step 2/3. In terms of biological role, catalyzes the condensation of carbamoyl phosphate and aspartate to form carbamoyl aspartate and inorganic phosphate, the committed step in the de novo pyrimidine nucleotide biosynthesis pathway. The polypeptide is Aspartate carbamoyltransferase catalytic subunit (Caulobacter vibrioides (strain ATCC 19089 / CIP 103742 / CB 15) (Caulobacter crescentus)).